A 266-amino-acid chain; its full sequence is Glutathione S-transferase AN1595 (266 aa).

In terms of domain architecture, GST N-terminal spans 43-123 (SFGKLYTYKR…HVTNEDSTTT (81 aa)). Glutathione contacts are provided by Lys-93, Glu-107, Cys-108, and Asn-143. Lys-93 is a substrate binding site. The GST C-terminal domain maps to 128–259 (SSLDFVQIIR…VEEGLPNAPP (132 aa)).

Belongs to the GST superfamily.

Its pathway is secondary metabolite biosynthesis; terpenoid biosynthesis. In terms of biological role, glutathione S-transferase; part of the gene cluster that mediates the biosynthesis of the diterpene ent-pimara-8(14),15-diene (PD). Within the cluster, the HMG-CoA reductase AN1593 functions in the mevalonate pathway, which produces isoprenoid precursors. The geranylgeranyl pyrophosphate (GGPP) synthase AN1592 is needed in the formation of GGPP, the precursor for diterpenes. Lastly, the pimaradiene synthase pbcA performs the 2 cyclization steps that convert GGPP to ent-pimara-8(14),15-diene. The putative roles of the remaining cluster enzymes in ent-pimara-8(14),15-diene biosynthesis is unclear. The cytochrome P450 monooxygenase AN1598, the glutathione S-transferase AN1595, the oxidoreductases AN1596 and AN1597 probably function as decorative enzymes. It is possible that in biological conditions the compound is oxidized to ent-pimara-8(14),15-dien-19-oic acid, which is a bioactive diterpene compound predominant in many plant extracts. The sequence is that of Glutathione S-transferase AN1595 from Emericella nidulans (strain FGSC A4 / ATCC 38163 / CBS 112.46 / NRRL 194 / M139) (Aspergillus nidulans).